Reading from the N-terminus, the 303-residue chain is Uricase (303 aa).

The residue at position 2 (Ala-2) is an N-acetylalanine. Lys-10 and Lys-23 each carry N6-acetyllysine; alternate. N6-succinyllysine; alternate occurs at positions 10 and 23. Lys-23 (charge relay system) is an active-site residue. Lys-27 and Lys-36 each carry N6-acetyllysine. Residues Ser-39 and Ser-63 each carry the phosphoserine modification. Residue Thr-68 is the Charge relay system of the active site. Urate-binding residues include Thr-68 and Asp-69. N6-acetyllysine occurs at positions 118, 122, and 164. Urate is bound at residue Phe-170. An N6-acetyllysine mark is found at Lys-175 and Lys-185. Residue Arg-187 participates in urate binding. Residues Lys-220 and Lys-227 each carry the N6-acetyllysine; alternate modification. N6-succinyllysine; alternate occurs at positions 220 and 227. Phosphoserine is present on Ser-231. Positions 234, 235, and 261 each coordinate urate. His-263 serves as the catalytic Charge relay system. Lys-277 is modified (N6-acetyllysine). At Tyr-288 the chain carries Phosphotyrosine. The short motif at 301–303 (SRL) is the Microbody targeting signal element.

This sequence belongs to the uricase family. In terms of processing, acetylation of Lys-118, Lys-164 and Lys-290 is observed in liver mitochondria from fasted mice but not from fed mice. May be deacetylated by Sirt5; however it is unclear whether Sirt5 mediates deacetylation or desuccinylation of Uox; additional evidence is required to validate these results.

Its subcellular location is the peroxisome. It is found in the mitochondrion. The enzyme catalyses urate + O2 + H2O = 5-hydroxyisourate + H2O2. The protein operates within purine metabolism; urate degradation; (S)-allantoin from urate: step 1/3. Its function is as follows. Catalyzes the oxidation of uric acid to 5-hydroxyisourate, which is further processed to form (S)-allantoin. In Mus musculus (Mouse), this protein is Uricase (Uox).